Here is an 89-residue protein sequence, read N- to C-terminus: MALLDFFLSRKKSTANIAKERLQIIVAERRRGDTEPAYLPDMKRDLLGVICKYVQIDPDMLSVQFEQKGDDISVLELNVTLPENEESPK.

The protein belongs to the MinE family.

Prevents the cell division inhibition by proteins MinC and MinD at internal division sites while permitting inhibition at polar sites. This ensures cell division at the proper site by restricting the formation of a division septum at the midpoint of the long axis of the cell. This is Cell division topological specificity factor from Proteus mirabilis (strain HI4320).